Reading from the N-terminus, the 802-residue chain is Aldehyde dehydrogenase family 16 member A1 (802 aa).

The interval 513-554 (SLPSGPETGPSPAPPYGLFVRGRFQSPGTQSSRPIKDSSGKV) is disordered.

It belongs to the aldehyde dehydrogenase family. In terms of assembly, interacts with SPG21.

This is Aldehyde dehydrogenase family 16 member A1 (Aldh16a1) from Rattus norvegicus (Rat).